The primary structure comprises 677 residues: Testis-specific Y-encoded-like protein 2 (677 aa).

The tract at residues 1–54 (MDRPDEGPPAKTPRLSSSEPRQRDLPPPPPPPLQRLPLPPPQQRPRPQEETEAA) is disordered. Residue K11 forms a Glycyl lysine isopeptide (Lys-Gly) (interchain with G-Cter in SUMO2) linkage. S18 carries the phosphoserine modification. Pro residues predominate over residues 25-44 (LPPPPPPPLQRLPLPPPQQR). Glycyl lysine isopeptide (Lys-Gly) (interchain with G-Cter in SUMO2) cross-links involve residues K158 and K160. Residues 175 to 202 (KESVRRRQRRRRRRRKQRKAKESRERSA) are disordered. A compositionally biased stretch (basic residues) spans 178–193 (VRRRQRRRRRRRKQRK). The residue at position 333 (T333) is a Phosphothreonine. The disordered stretch occupies residues 469–658 (ANENLCDSEN…EVNSEDSDIQ (190 aa)). Residues 484–493 (GYNTKITDNK) are compositionally biased toward polar residues. The span at 509–525 (EKNTYDSEDSNSEKADG) shows a compositional bias: basic and acidic residues. Polar residues predominate over residues 526–540 (DNTTLRDNQQVTNIQ). Composition is skewed to acidic residues over residues 543–581 (SDSDNGDEGSDDEDDDGNEGDNEGSDDDDDDNEGSDDDD) and 606–627 (DYEEEVELISEDSVEEEEETSE). The span at 639 to 650 (DERIYGEERSEV) shows a compositional bias: basic and acidic residues. A phosphoserine mark is found at S648, S652, and S655.

Belongs to the nucleosome assembly protein (NAP) family. As to quaternary structure, interacts with histones. Interacts with CASK. Part of a complex containing CASK, TBR1 and TSPYL2. In terms of processing, phosphorylation at Thr-333 impairs function on cell proliferation. As to expression, present at high levels in the pituitary gland and at moderate levels in adrenal gland, brain, testis and ovary. In brain, expressed both in mature neurons and progenitor cells (at protein level).

It is found in the nucleus. The protein localises to the cytoplasm. In terms of biological role, part of the CASK/TBR1/TSPYL2 transcriptional complex which modulates gene expression in response to neuronal synaptic activity, probably by facilitating nucleosome assembly. May inhibit cell proliferation by inducing p53-dependent CDKN1A expression. This Mus musculus (Mouse) protein is Testis-specific Y-encoded-like protein 2 (Tspyl2).